Here is a 350-residue protein sequence, read N- to C-terminus: MTLNKVYYSGGEEIRDLTIVGGGPTGIFAAFQCGMNNITSRIIESMPQLGGQLAALYPEKHIYDVAGFHEVPAAGLVDSLWKQAERYHPEINLGEAVTRYRKLDDGSFETTTKSGKVFLSRALLLAAGLGAFTPRTLPQLGCVDHLEGRSIFYAVKNIRDFAGKKVVIVGGGDSALDWAVGLLDAAEHVTLVHRMHEFQGHGKTAREVDEARDKGVIDVYMDTEVTAIETAEGGMKNVTLLRKNGASVVLEADRLLILIGFRSNLGPLAEWDLELVDNALVVDSHMKTSVDGLYAAGDIAWYPGKLKIIQTGLSDAAMAVRHSLNYIRPGEKIRHTFSSVKMAKQKKNEQ.

8 residues coordinate FAD: Thr-25, Glu-44, Gln-52, Tyr-57, Val-97, Phe-132, Asp-298, and Ser-339.

This sequence belongs to the ferredoxin--NADP reductase type 2 family. As to quaternary structure, homodimer. FAD is required as a cofactor.

It catalyses the reaction 2 reduced [2Fe-2S]-[ferredoxin] + NADP(+) + H(+) = 2 oxidized [2Fe-2S]-[ferredoxin] + NADPH. This chain is Ferredoxin--NADP reductase, found in Chlorobium limicola (strain DSM 245 / NBRC 103803 / 6330).